The chain runs to 104 residues: Small ribosomal subunit protein uS10 (104 aa).

It belongs to the universal ribosomal protein uS10 family. In terms of assembly, part of the 30S ribosomal subunit.

Its function is as follows. Involved in the binding of tRNA to the ribosomes. The chain is Small ribosomal subunit protein uS10 from Alkaliphilus oremlandii (strain OhILAs) (Clostridium oremlandii (strain OhILAs)).